Reading from the N-terminus, the 834-residue chain is Periplasmic nitrate reductase (834 aa).

Residues 1–29 (MNLTRREFAKANAAAIAAAAAGLPILVRA) constitute a signal peptide (tat-type signal). One can recognise a 4Fe-4S Mo/W bis-MGD-type domain in the interval 41 to 97 (LDWNKAPCRFCGTGCSVMVATRDGQVVATHGDIKAEVNRGINCVKGYFLSKIMYGSD). 4 residues coordinate [4Fe-4S] cluster: Cys-48, Cys-51, Cys-55, and Cys-83. Residues Lys-85, Gln-152, Asn-177, Cys-181, 214 to 221 (WGSNMAEM), 245 to 249 (STFEH), 264 to 266 (QTD), Met-375, Gln-379, Asn-485, 511 to 512 (SD), Lys-534, Asp-561, and 721 to 730 (TGRVLEHWHT) each bind Mo-bis(molybdopterin guanine dinucleotide). Residue Phe-797 coordinates substrate. Positions 805 and 822 each coordinate Mo-bis(molybdopterin guanine dinucleotide).

This sequence belongs to the prokaryotic molybdopterin-containing oxidoreductase family. NasA/NapA/NarB subfamily. Component of the periplasmic nitrate reductase NapAB complex composed of NapA and NapB. It depends on [4Fe-4S] cluster as a cofactor. Mo-bis(molybdopterin guanine dinucleotide) is required as a cofactor. Post-translationally, predicted to be exported by the Tat system. The position of the signal peptide cleavage has not been experimentally proven.

The protein localises to the periplasm. The catalysed reaction is 2 Fe(II)-[cytochrome] + nitrate + 2 H(+) = 2 Fe(III)-[cytochrome] + nitrite + H2O. Its function is as follows. Catalytic subunit of the periplasmic nitrate reductase complex NapAB. Receives electrons from NapB and catalyzes the reduction of nitrate to nitrite. The polypeptide is Periplasmic nitrate reductase (Pseudomonas paraeruginosa (strain DSM 24068 / PA7) (Pseudomonas aeruginosa (strain PA7))).